The primary structure comprises 568 residues: DNA ligase (568 aa).

An ATP-binding site is contributed by Glu249. The active-site N6-AMP-lysine intermediate is Lys251. ATP contacts are provided by Arg256, Arg271, Glu301, Phe342, Arg418, and Lys424.

Belongs to the ATP-dependent DNA ligase family. The cofactor is Mg(2+).

The enzyme catalyses ATP + (deoxyribonucleotide)n-3'-hydroxyl + 5'-phospho-(deoxyribonucleotide)m = (deoxyribonucleotide)n+m + AMP + diphosphate.. Functionally, DNA ligase that seals nicks in double-stranded DNA during DNA replication, DNA recombination and DNA repair. In Methanocella arvoryzae (strain DSM 22066 / NBRC 105507 / MRE50), this protein is DNA ligase.